A 517-amino-acid chain; its full sequence is Probable G-protein coupled receptor Mth-like 4 (517 aa).

The first 18 residues, 1–18, serve as a signal peptide directing secretion; the sequence is MRILLIAVLFLLMPKSNA. Over 19-212 the chain is Extracellular; sequence EIPGCDFFDT…LSSEHSRTWK (194 aa). 5 disulfides stabilise this stretch: C23–C77, C79–C84, C88–C183, C89–C100, and C145–C201. N-linked (GlcNAc...) asparagine glycosylation occurs at N39. N-linked (GlcNAc...) asparagine glycosylation is found at N117 and N165. A helical transmembrane segment spans residues 213-233; that stretch reads TVAIVISLICIILTISVYLYV. The Cytoplasmic portion of the chain corresponds to 234–242; sequence EKLRNLHGK. A helical transmembrane segment spans residues 243 to 263; sequence CFICYLASLFLGYFFLVLNVW. The Extracellular portion of the chain corresponds to 264–272; sequence KYSSGFCVT. The helical transmembrane segment at 273 to 293 threads the bilayer; it reads AGFLGYFSVMAAFFWLSVIGI. The Cytoplasmic segment spans residues 294 to 319; sequence HLRIKFSLASNCLHRLLPENPFRAYN. The chain crosses the membrane as a helical span at residues 320 to 340; that stretch reads LYAWGIPLIMTAITYTADQVV. The Extracellular segment spans residues 341-363; it reads KNEKLRPRVGVGKNCWIYTGDMT. Residues 364–384 form a helical membrane-spanning segment; the sequence is VMIYFYGPMLLLIAFNIIMFV. The Cytoplasmic segment spans residues 385-414; it reads LSAIYIYNIKKNVKGLVHKQQTNQQINDQQ. Residues 415–435 form a helical membrane-spanning segment; sequence MFAIFLRLFILMGLSWSFEIL. Topologically, residues 436 to 459 are extracellular; it reads SFLLTKQQAWARALMVADYFNWSQ. N-linked (GlcNAc...) asparagine glycosylation is present at N456. Residues 460 to 480 traverse the membrane as a helical segment; the sequence is GTIIFVLFILKPSILKLIIAG. At 481-517 the chain is on the cytoplasmic side; the sequence is GRQNLPGSHHNSRSKAARYNSTHTACEGSIADPNAYC.

The protein belongs to the G-protein coupled receptor 2 family. Mth subfamily.

The protein resides in the cell membrane. This is Probable G-protein coupled receptor Mth-like 4 (mthl4) from Drosophila melanogaster (Fruit fly).